The following is a 451-amino-acid chain: Signal transduction histidine-protein kinase ArlS (451 aa).

Helical transmembrane passes span 11–31 (IIVT…IIIF) and 156–176 (IIAL…SYVF). The region spanning 178-231 (TQITKPLVSLSNKMIEIRRDGFQNKLQLNTNYEEIDNLANTFNEMMSQIEESFN) is the HAMP domain. A Histidine kinase domain is found at 239–451 (DASHELRTPL…NKGTTFKIIF (213 aa)). Histidine 242 bears the Phosphohistidine; by autocatalysis mark.

Autophosphorylated.

It is found in the cell membrane. It catalyses the reaction ATP + protein L-histidine = ADP + protein N-phospho-L-histidine.. In terms of biological role, member of the two-component regulatory system ArlS/ArlR involved in the regulation of adhesion, autolysis, multidrug resistance and virulence. ArlS probably functions as a sensor protein kinase which is autophosphorylated at a histidine residue and transfers its phosphate group to ArlR. This chain is Signal transduction histidine-protein kinase ArlS (arlS), found in Staphylococcus aureus (strain MRSA252).